The sequence spans 741 residues: Zinc finger and BTB domain-containing protein 20 (741 aa).

The span at 1–17 shows a compositional bias: basic and acidic residues; it reads MLERKKPKTAENQKASE. The disordered stretch occupies residues 1 to 32; that stretch reads MLERKKPKTAENQKASEENEITQPGGSSAKPG. Positions 104 to 167 constitute a BTB domain; it reads CDVTVRIHGS…MYSGVLRVSQ (64 aa). The segment at 203 to 235 is disordered; that stretch reads GIQDSGQDTPRGTPESGTSGQSSDTESGYLQSH. Over residues 206–235 the composition is skewed to polar residues; it reads DSGQDTPRGTPESGTSGQSSDTESGYLQSH. The residue at position 211 (T211) is a Phosphothreonine. K330 is covalently cross-linked (Glycyl lysine isopeptide (Lys-Gly) (interchain with G-Cter in SUMO1); alternate). K330 is covalently cross-linked (Glycyl lysine isopeptide (Lys-Gly) (interchain with G-Cter in SUMO2); alternate). The tract at residues 350-440 is disordered; that stretch reads RNESEECTED…SSPERSNEVE (91 aa). The residue at position 353 (S353) is a Phosphoserine. Residues 354–367 are compositionally biased toward acidic residues; sequence EECTEDTDQAEGTE. A Phosphothreonine modification is found at T357. K371 is covalently cross-linked (Glycyl lysine isopeptide (Lys-Gly) (interchain with G-Cter in SUMO2)). A compositionally biased stretch (low complexity) spans 404-423; sequence AEPTQPEQAAEAPAEGGPQT. The segment covering 424–434 has biased composition (polar residues); it reads NQLETGASSPE. 4 consecutive C2H2-type zinc fingers follow at residues 578 to 600, 606 to 628, 634 to 656, and 662 to 684; these read YECTLCNKTFTAKQNYVKHMFVH, HQCSICWRSFSLKDYLIKHMVTH, YQCSICNKRFTQKSSLNVHMRLH, and YECYICKKKFSHKTLLERHVALH. A phosphothreonine mark is found at T690 and T695. Residues 715–737 form a C2H2-type 5 zinc finger; sequence YVCSVCPAKFDQIEQFNDHMRMH. K723 participates in a covalent cross-link: Glycyl lysine isopeptide (Lys-Gly) (interchain with G-Cter in SUMO2).

As to quaternary structure, can homodimerize. Binds to DNA. Post-translationally, sumoylated with SUMO1. Expressed in spleen, lymph node, thymus, peripheral blood leukocytes, and fetal liver.

It is found in the nucleus. Its function is as follows. May be a transcription factor that may be involved in hematopoiesis, oncogenesis, and immune responses. Plays a role in postnatal myogenesis, may be involved in the regulation of satellite cells self-renewal. This is Zinc finger and BTB domain-containing protein 20 (ZBTB20) from Homo sapiens (Human).